Consider the following 272-residue polypeptide: D-aminoacyl-tRNA deacylase (272 aa).

It belongs to the DtdA deacylase family. Monomer. The cofactor is Zn(2+).

It carries out the reaction a D-aminoacyl-tRNA + H2O = a tRNA + a D-alpha-amino acid + H(+). It catalyses the reaction glycyl-tRNA(Ala) + H2O = tRNA(Ala) + glycine + H(+). In terms of biological role, D-aminoacyl-tRNA deacylase with broad substrate specificity. By recycling D-aminoacyl-tRNA to D-amino acids and free tRNA molecules, this enzyme counteracts the toxicity associated with the formation of D-aminoacyl-tRNA entities in vivo. In Hyperthermus butylicus (strain DSM 5456 / JCM 9403 / PLM1-5), this protein is D-aminoacyl-tRNA deacylase.